Reading from the N-terminus, the 241-residue chain is 3-dehydroquinate dehydratase (241 aa).

Residues 35–37 (ELR) and Arg-70 each bind 3-dehydroquinate. The active-site Proton donor/acceptor is His-133. Lys-160 (schiff-base intermediate with substrate) is an active-site residue. 3-dehydroquinate is bound by residues Arg-202 and Gln-225.

Belongs to the type-I 3-dehydroquinase family. In terms of assembly, homodimer.

It carries out the reaction 3-dehydroquinate = 3-dehydroshikimate + H2O. It participates in metabolic intermediate biosynthesis; chorismate biosynthesis; chorismate from D-erythrose 4-phosphate and phosphoenolpyruvate: step 3/7. Involved in the third step of the chorismate pathway, which leads to the biosynthesis of aromatic amino acids. Catalyzes the cis-dehydration of 3-dehydroquinate (DHQ) and introduces the first double bond of the aromatic ring to yield 3-dehydroshikimate. The sequence is that of 3-dehydroquinate dehydratase from Staphylococcus haemolyticus (strain JCSC1435).